Consider the following 157-residue polypeptide: Baculoviral IAP repeat-containing protein 5.2-B (157 aa).

The stretch at 31-101 is one BIR repeat; sequence RLRTFSNWPF…KHSPSCLFIA (71 aa). Thr-47 is modified (phosphothreonine; by CDK1). 4 residues coordinate Zn(2+): Cys-70, Cys-73, His-90, and Cys-97.

Belongs to the IAP family. As to quaternary structure, component of the CPC at least composed of survivin/birc5, incenp, cdca8/borealin and/or cdca9/dasra-A, and aurkb/aurora-B. Interacts directly with incenp (via N-terminus). Interacts with rxra; the interaction is stronger in the absence of 9-cis retinoic acids. Ubiquitination is required for centrosome-targeting. As to expression, exhibits strong and homogeneous expression in developing oocytes. In embryos, expressed in the animal hemisphere from one-cell to yolk plug stages, and highly expressed in the future brain and dorsal region of the neural tube at the neurula stage and early tail-bud stage. At tadpole stages, expression is restricted at a low level to the head region.

The protein localises to the cytoplasm. It is found in the nucleus. Its subcellular location is the chromosome. It localises to the centromere. The protein resides in the cytoskeleton. The protein localises to the spindle. In terms of biological role, does not appear to exhibit anti-apoptotic activity. Plays a role in increasing blood vessel size during development. Component of the chromosomal passenger complex (CPC), a complex that acts as a key regulator of mitosis. The CPC complex has essential functions at the centromere in ensuring correct chromosome alignment and segregation and is required for chromatin-induced microtubule stabilization and spindle assembly. This Xenopus laevis (African clawed frog) protein is Baculoviral IAP repeat-containing protein 5.2-B (birc5.2-b).